A 360-amino-acid chain; its full sequence is Peptide chain release factor 1 (360 aa).

At Q237 the chain carries N5-methylglutamine.

Belongs to the prokaryotic/mitochondrial release factor family. In terms of processing, methylated by PrmC. Methylation increases the termination efficiency of RF1.

It localises to the cytoplasm. Functionally, peptide chain release factor 1 directs the termination of translation in response to the peptide chain termination codons UAG and UAA. This Pseudomonas fluorescens (strain SBW25) protein is Peptide chain release factor 1.